The chain runs to 435 residues: WD repeat domain phosphoinositide-interacting protein 2 (435 aa).

A WD 1 repeat occupies 182–222 (AHDSPLAALAFDASGTKLATASEKGTVIRVFSIPEGQKLFE). The L/FRRG motif motif lies at 223–226 (FRRG). WD repeat units lie at residues 228–267 (KRCVSICSLAFSMDSIFLSASSNTETVHIFKLETIKEKPP) and 311–349 (GHKNICALATIQKISRLLVGAADGYLYIYNFDPQEGGEC). The segment at 386–435 (VTKTYPPPSPTRHAYADDLGAVGGASEEDEMGNLRLDEDNENPPMILQTE) is disordered.

The protein belongs to the WD repeat PROPPIN family.

It localises to the preautophagosomal structure membrane. Functionally, component of the autophagy machinery that controls the major intracellular degradation process by which cytoplasmic materials are packaged into autophagosomes and delivered to lysosomes for degradation. Involved in an early step of the formation of preautophagosomal structures. The chain is WD repeat domain phosphoinositide-interacting protein 2 (wipi2) from Xenopus laevis (African clawed frog).